A 182-amino-acid chain; its full sequence is MKEQEIQSSMNKSVEATQRNFNTIRTGRANASLLDRISVEYYGAETPIKSLASIATVDSQTISIQPFDISCLQAIEKAISMSDLGITPNNDGKVIRINVPPLTEERRKEFCKLASKYAEEGKVALRNIRRDAVDKEKKDEKEGLISIDESRDNQLEIQKFTDKYISLIETKLSEKEKEILKV.

The protein belongs to the RRF family.

It is found in the cytoplasm. Functionally, responsible for the release of ribosomes from messenger RNA at the termination of protein biosynthesis. May increase the efficiency of translation by recycling ribosomes from one round of translation to another. In Prochlorococcus marinus (strain MIT 9515), this protein is Ribosome-recycling factor.